The following is a 251-amino-acid chain: Aspartate/glutamate leucyltransferase (251 aa).

The protein belongs to the R-transferase family. Bpt subfamily.

It is found in the cytoplasm. It carries out the reaction N-terminal L-glutamyl-[protein] + L-leucyl-tRNA(Leu) = N-terminal L-leucyl-L-glutamyl-[protein] + tRNA(Leu) + H(+). It catalyses the reaction N-terminal L-aspartyl-[protein] + L-leucyl-tRNA(Leu) = N-terminal L-leucyl-L-aspartyl-[protein] + tRNA(Leu) + H(+). Functions in the N-end rule pathway of protein degradation where it conjugates Leu from its aminoacyl-tRNA to the N-termini of proteins containing an N-terminal aspartate or glutamate. This Stenotrophomonas maltophilia (strain R551-3) protein is Aspartate/glutamate leucyltransferase.